Consider the following 840-residue polypeptide: Translation initiation factor IF-2 (840 aa).

Basic and acidic residues predominate over residues 95-143 (RSPDEIEAERQRELEEQRAAEEAERLKAEEAAARQRAEEEARKAEEAAR). Disordered regions lie at residues 95–155 (RSPD…ATAG) and 173–256 (PAAV…PTGP). Low complexity predominate over residues 144 to 155 (AKAAQEAAATAG). Basic and acidic residues-rich tracts occupy residues 175–191 (AVEE…PKRD) and 223–232 (STDEESDGYR). Residues 233–247 (RGGRGGKSKLKKRNQ) show a composition bias toward basic residues. Residues 340–509 (TRAPVVTVMG…LLQAEVLELK (170 aa)) enclose the tr-type G domain. Residues 349-356 (GHVDHGKT) are G1. 349–356 (GHVDHGKT) is a GTP binding site. Residues 374–378 (GITQH) are G2. The tract at residues 395-398 (DTPG) is G3. Residues 395–399 (DTPGH) and 449–452 (NKID) contribute to the GTP site. Positions 449-452 (NKID) are G4. A G5 region spans residues 485–487 (SAK).

The protein belongs to the TRAFAC class translation factor GTPase superfamily. Classic translation factor GTPase family. IF-2 subfamily.

It is found in the cytoplasm. Functionally, one of the essential components for the initiation of protein synthesis. Protects formylmethionyl-tRNA from spontaneous hydrolysis and promotes its binding to the 30S ribosomal subunits. Also involved in the hydrolysis of GTP during the formation of the 70S ribosomal complex. This Pseudomonas aeruginosa (strain ATCC 15692 / DSM 22644 / CIP 104116 / JCM 14847 / LMG 12228 / 1C / PRS 101 / PAO1) protein is Translation initiation factor IF-2.